A 258-amino-acid polypeptide reads, in one-letter code: Ribosomal RNA small subunit methyltransferase J (258 aa).

Residues 107–108, 123–124, and aspartate 177 each bind S-adenosyl-L-methionine; these read RD and ER.

This sequence belongs to the methyltransferase superfamily. RsmJ family.

It is found in the cytoplasm. It carries out the reaction guanosine(1516) in 16S rRNA + S-adenosyl-L-methionine = N(2)-methylguanosine(1516) in 16S rRNA + S-adenosyl-L-homocysteine + H(+). Specifically methylates the guanosine in position 1516 of 16S rRNA. The sequence is that of Ribosomal RNA small subunit methyltransferase J from Stutzerimonas stutzeri (strain A1501) (Pseudomonas stutzeri).